A 299-amino-acid polypeptide reads, in one-letter code: tRNA dimethylallyltransferase (299 aa).

Position 13 to 20 (Gly13 to Thr20) interacts with ATP. Substrate is bound at residue Thr15–Thr20. Residues Asp38–Gln41 are interaction with substrate tRNA.

The protein belongs to the IPP transferase family. As to quaternary structure, monomer. Requires Mg(2+) as cofactor.

It carries out the reaction adenosine(37) in tRNA + dimethylallyl diphosphate = N(6)-dimethylallyladenosine(37) in tRNA + diphosphate. In terms of biological role, catalyzes the transfer of a dimethylallyl group onto the adenine at position 37 in tRNAs that read codons beginning with uridine, leading to the formation of N6-(dimethylallyl)adenosine (i(6)A). The polypeptide is tRNA dimethylallyltransferase (Parasynechococcus marenigrum (strain WH8102)).